The sequence spans 238 residues: Ribitol-5-phosphate cytidylyltransferase (238 aa).

CTP is bound by residues 7 to 10 and 81 to 87; these read LAGG and GSDRNET.

Belongs to the IspD/TarI cytidylyltransferase family. TarI subfamily.

It catalyses the reaction D-ribitol 5-phosphate + CTP + H(+) = CDP-L-ribitol + diphosphate. The protein operates within cell wall biogenesis; poly(ribitol phosphate) teichoic acid biosynthesis. Catalyzes the transfer of the cytidylyl group of CTP to D-ribitol 5-phosphate. This Staphylococcus saprophyticus subsp. saprophyticus (strain ATCC 15305 / DSM 20229 / NCIMB 8711 / NCTC 7292 / S-41) protein is Ribitol-5-phosphate cytidylyltransferase.